The sequence spans 314 residues: Melanoma-associated antigen 3 (314 aa).

The segment covering 1 to 20 (MPLEQRSQHCKPEEGLEARG) has biased composition (basic and acidic residues). The tract at residues 1–99 (MPLEQRSQHC…QEEEGPSTFP (99 aa)) is disordered. Low complexity predominate over residues 21–44 (EALGLVGAQAPATEEQEAASSSST). Residues 65-87 (PQGASSLPTTMNYPLWSQSYEDS) are compositionally biased toward polar residues. The region spanning 109–308 (LSRKVAELVH…ISYPPLHEWV (200 aa)) is the MAGE domain.

Interacts with TRIM28. In terms of processing, ubiquitinated by the DCX(DCAF12) complex specifically recognizes the diglutamate (Glu-Glu) at the C-terminus, leading to its degradation. Expressed in many tumors of several types, such as melanoma, head and neck squamous cell carcinoma, lung carcinoma and breast carcinoma, but not in normal tissues except for testes and placenta. Never expressed in kidney tumors, Leukemias and lymphomas.

Functionally, activator of ubiquitin ligase activity of RING-type zinc finger-containing E3 ubiquitin-protein ligases that acts as a repressor of autophagy. May enhance ubiquitin ligase activity of TRIM28 and stimulate p53/TP53 ubiquitination by TRIM28. Proposed to act through recruitment and/or stabilization of the Ubl-conjugating enzyme (E2) at the E3:substrate complex. May play a role in embryonal development and tumor transformation or aspects of tumor progression. In vitro promotes cell viability in melanoma cell lines. Antigen recognized on a melanoma by autologous cytolytic T-lymphocytes. This Homo sapiens (Human) protein is Melanoma-associated antigen 3.